A 263-amino-acid polypeptide reads, in one-letter code: Protein M1627_2099 (263 aa).

Belongs to the CinA family.

The polypeptide is Protein M1627_2099 (Saccharolobus islandicus (strain M.16.27) (Sulfolobus islandicus)).